Consider the following 99-residue polypeptide: DASH complex subunit DAD1 (99 aa).

Residues 69 to 99 (GMNHQTRENTRDENNKISSSDTEDENNNNKI) form a disordered region. Positions 73–83 (QTRENTRDENN) are enriched in basic and acidic residues. The span at 89–99 (DTEDENNNNKI) shows a compositional bias: acidic residues.

Belongs to the DASH complex DAD1 family. In terms of assembly, component of the DASH complex consisting of ASK1, DAD1, DAD2, DAD3, DAD4, DAM1, DUO1, HSK3, SPC19 and SPC34, with a stoichiometry of one copy of each subunit per complex. Multiple DASH complexes oligomerize to form a ring that encircles spindle microtubules and organizes the rod-like NDC80 complexes of the outer kinetochore. DASH complex oligomerization strengthens microtubule attachments. On cytoplasmic microtubules, DASH complexes appear to form patches instead of rings.

The protein localises to the chromosome. It is found in the centromere. The protein resides in the kinetochore. Its subcellular location is the cytoplasm. It localises to the cytoskeleton. The protein localises to the spindle. It is found in the nucleus. Functionally, component of the DASH complex that connects microtubules with kinetochores and couples microtubule depolymerisation to chromosome movement; it is involved in retrieving kinetochores to the spindle poles before their re-orientation on the spindle in early mitosis and allows microtubule depolymerization to pull chromosomes apart and resist detachment during anaphase. Kinetochores, consisting of a centromere-associated inner segment and a microtubule-contacting outer segment, play a crucial role in chromosome segregation by mediating the physical connection between centromeric DNA and microtubules. Kinetochores also serve as an input point for the spindle assembly checkpoint, which delays anaphase until all chromosomes have bioriented on the mitotic spindle. This chain is DASH complex subunit DAD1, found in Candida albicans (strain SC5314 / ATCC MYA-2876) (Yeast).